We begin with the raw amino-acid sequence, 588 residues long: Sentrin-specific protease 2 (588 aa).

Positions 28–31 (KRRR) match the Nuclear localization signal motif. Serine 32 is subject to Phosphoserine. Residues 47–52 (PAKRPR) carry the Nuclear localization signal motif. A disordered region spans residues 157–184 (EGYNRRPSGRRHSKSNPESSLTWKPQEQ). The span at 172–184 (NPESSLTWKPQEQ) shows a compositional bias: polar residues. The short motif at 316–331 (MEPDLSEEVSARLRLG) is the Nuclear export signal element. Phosphoserine is present on residues serine 332 and serine 343. A protease region spans residues 394-558 (LRITRGDIQT…MFTCKYADYI (165 aa)). Active-site residues include histidine 477 and aspartate 494. Residue cysteine 547 is the Nucleophile of the active site.

It belongs to the peptidase C48 family. In terms of assembly, binds to SUMO2 and SUMO3. Interacts with the C-terminal domain of NUP153 via its N-terminus. Interacts with MTA1. Post-translationally, polyubiquitinated; which leads to proteasomal degradation. As to expression, highly expressed in testis. Detected in brain, heart and thymus.

The protein resides in the nucleus. Its subcellular location is the nuclear pore complex. It is found in the nucleus membrane. It localises to the cytoplasm. The protein localises to the cytoplasmic vesicle. The protein resides in the PML body. Functionally, protease that catalyzes two essential functions in the SUMO pathway. The first is the hydrolysis of an alpha-linked peptide bond at the C-terminal end of the small ubiquitin-like modifier (SUMO) propeptides, SUMO1, SUMO2 and SUMO3 leading to the mature form of the proteins. The second is the deconjugation of SUMO1, SUMO2 and SUMO3 from targeted proteins, by cleaving an epsilon-linked peptide bond between the C-terminal glycine of the mature SUMO and the lysine epsilon-amino group of the target protein. May down-regulate CTNNB1 levels and thereby modulate the Wnt pathway. Deconjugates SUMO2 from MTA1. Plays a dynamic role in adipogenesis by desumoylating and promoting the stabilization of CEBPB. Acts as a regulator of the cGAS-STING pathway by catalyzing desumoylation of CGAS and STING1 during the late phase of viral infection. Its function is as follows. Activates transcription. This Mus musculus (Mouse) protein is Sentrin-specific protease 2 (Senp2).